A 317-amino-acid polypeptide reads, in one-letter code: Ribosomal RNA small subunit methyltransferase H (317 aa).

Residues 32–34 (GGH), aspartate 51, phenylalanine 78, aspartate 99, and glutamine 106 contribute to the S-adenosyl-L-methionine site.

Belongs to the methyltransferase superfamily. RsmH family.

It localises to the cytoplasm. It catalyses the reaction cytidine(1402) in 16S rRNA + S-adenosyl-L-methionine = N(4)-methylcytidine(1402) in 16S rRNA + S-adenosyl-L-homocysteine + H(+). Specifically methylates the N4 position of cytidine in position 1402 (C1402) of 16S rRNA. The chain is Ribosomal RNA small subunit methyltransferase H from Helicobacter hepaticus (strain ATCC 51449 / 3B1).